Reading from the N-terminus, the 512-residue chain is MQLNPAEISELIKSRIEGLGAATDVRNQGTVVSVTDGIVRVHGLSDAMAGEMLEFPGNVFGLALNLERDSVGAVILGEYEGISEGDTVRCTGRILEVPVGPELIGRVVNALGQPIDGKGPINAKMTDVIEKVAPGVIARKSVDQPVQTGLKSIDSMVPIGRGQRELIIGDRQTGKTAVAIDAIINQKGQNMTCVYVAIGQKASSIKNVVRALEQAGAMEYTIVVAASASESAAMQYISAYTGCTMGEYFRDRGEDALIVYDDLSKQAVAYRQVSLLLRRPPGREAFPGDVFYLHSRLLERAARVNADYVEAFTKGAVKGKTGSLTALPVIETQAGDVSAFVPTNVISITDGQIFLETSLFNAGIRPAINAGISVSRVGGAAQTKLIKGLSGGIRTDLAQYRELAAFAQFASDLDASTRKQLDRGARVTELLKQAQYSPQPISLMGATLYAVNKGYLDDIEVKKVLAFESGMHQYLKTSHAALLQKLETTKALDKDAEAELQGAIAAFKKSFA.

Position 169–176 (169–176 (GDRQTGKT)) interacts with ATP.

Belongs to the ATPase alpha/beta chains family. In terms of assembly, F-type ATPases have 2 components, CF(1) - the catalytic core - and CF(0) - the membrane proton channel. CF(1) has five subunits: alpha(3), beta(3), gamma(1), delta(1), epsilon(1). CF(0) has three main subunits: a(1), b(2) and c(9-12). The alpha and beta chains form an alternating ring which encloses part of the gamma chain. CF(1) is attached to CF(0) by a central stalk formed by the gamma and epsilon chains, while a peripheral stalk is formed by the delta and b chains.

It is found in the cell inner membrane. It carries out the reaction ATP + H2O + 4 H(+)(in) = ADP + phosphate + 5 H(+)(out). Produces ATP from ADP in the presence of a proton gradient across the membrane. The alpha chain is a regulatory subunit. This is ATP synthase subunit alpha from Leptothrix cholodnii (strain ATCC 51168 / LMG 8142 / SP-6) (Leptothrix discophora (strain SP-6)).